Here is a 181-residue protein sequence, read N- to C-terminus: ATP synthase subunit delta (181 aa).

The protein belongs to the ATPase delta chain family. F-type ATPases have 2 components, F(1) - the catalytic core - and F(0) - the membrane proton channel. F(1) has five subunits: alpha(3), beta(3), gamma(1), delta(1), epsilon(1). F(0) has three main subunits: a(1), b(2) and c(10-14). The alpha and beta chains form an alternating ring which encloses part of the gamma chain. F(1) is attached to F(0) by a central stalk formed by the gamma and epsilon chains, while a peripheral stalk is formed by the delta and b chains.

The protein localises to the cell membrane. In terms of biological role, f(1)F(0) ATP synthase produces ATP from ADP in the presence of a proton or sodium gradient. F-type ATPases consist of two structural domains, F(1) containing the extramembraneous catalytic core and F(0) containing the membrane proton channel, linked together by a central stalk and a peripheral stalk. During catalysis, ATP synthesis in the catalytic domain of F(1) is coupled via a rotary mechanism of the central stalk subunits to proton translocation. This protein is part of the stalk that links CF(0) to CF(1). It either transmits conformational changes from CF(0) to CF(1) or is implicated in proton conduction. The sequence is that of ATP synthase subunit delta from Bacillus pumilus (strain SAFR-032).